Reading from the N-terminus, the 705-residue chain is Ribosomal RNA large subunit methyltransferase K/L (705 aa).

The THUMP domain maps to 43 to 154 (LLYQSLLWSR…RDTASVALDL (112 aa)).

It belongs to the methyltransferase superfamily. RlmKL family.

It localises to the cytoplasm. The enzyme catalyses guanosine(2445) in 23S rRNA + S-adenosyl-L-methionine = N(2)-methylguanosine(2445) in 23S rRNA + S-adenosyl-L-homocysteine + H(+). It carries out the reaction guanosine(2069) in 23S rRNA + S-adenosyl-L-methionine = N(2)-methylguanosine(2069) in 23S rRNA + S-adenosyl-L-homocysteine + H(+). Its function is as follows. Specifically methylates the guanine in position 2445 (m2G2445) and the guanine in position 2069 (m7G2069) of 23S rRNA. The chain is Ribosomal RNA large subunit methyltransferase K/L from Pectobacterium atrosepticum (strain SCRI 1043 / ATCC BAA-672) (Erwinia carotovora subsp. atroseptica).